Here is a 172-residue protein sequence, read N- to C-terminus: Cytidylate kinase (172 aa).

7 to 15 (GLAGTGTTT) lines the ATP pocket.

Belongs to the cytidylate kinase family. Type 2 subfamily.

The protein localises to the cytoplasm. It catalyses the reaction CMP + ATP = CDP + ADP. It carries out the reaction dCMP + ATP = dCDP + ADP. This is Cytidylate kinase from Methanobrevibacter smithii (strain ATCC 35061 / DSM 861 / OCM 144 / PS).